A 74-amino-acid polypeptide reads, in one-letter code: Kappa-scoloptoxin(07)-Ssm2a (74 aa).

The N-terminal stretch at 1–19 (MLVFYALLFVTVFSNTVMG) is a signal peptide. A propeptide spanning residues 20–41 (ATIDKPIPKPILREAIEEIEVN) is cleaved from the precursor.

This sequence belongs to the scoloptoxin-07 family. Post-translationally, contains 3 disulfide bonds. Expressed by the venom gland.

The protein resides in the secreted. In terms of biological role, toxin that inhibits voltage-gated potassium channel currents in DRG neurons (IC(50)=about 570 nM). In vivo, induces neurotoxicity shown by twitching, paralysis, and body contraction. In vivo, insects injected with this toxin showed signs of neurotoxicity including twitching, paralysis, and body contraction. The polypeptide is Kappa-scoloptoxin(07)-Ssm2a (Scolopendra mutilans (Chinese red-headed centipede)).